A 196-amino-acid polypeptide reads, in one-letter code: Pyridoxal 5'-phosphate synthase subunit PdxT (196 aa).

Residue 47-49 coordinates L-glutamine; sequence GES. Cysteine 79 acts as the Nucleophile in catalysis. Residues arginine 106 and 134-135 contribute to the L-glutamine site; that span reads IR. Residues histidine 170 and glutamate 172 each act as charge relay system in the active site.

The protein belongs to the glutaminase PdxT/SNO family. In terms of assembly, in the presence of PdxS, forms a dodecamer of heterodimers. Only shows activity in the heterodimer.

The catalysed reaction is aldehydo-D-ribose 5-phosphate + D-glyceraldehyde 3-phosphate + L-glutamine = pyridoxal 5'-phosphate + L-glutamate + phosphate + 3 H2O + H(+). It catalyses the reaction L-glutamine + H2O = L-glutamate + NH4(+). Its pathway is cofactor biosynthesis; pyridoxal 5'-phosphate biosynthesis. Its function is as follows. Catalyzes the hydrolysis of glutamine to glutamate and ammonia as part of the biosynthesis of pyridoxal 5'-phosphate. The resulting ammonia molecule is channeled to the active site of PdxS. In Bacillus cereus (strain ZK / E33L), this protein is Pyridoxal 5'-phosphate synthase subunit PdxT.